A 969-amino-acid chain; its full sequence is Defective in germ line development protein 3 (969 aa).

Residues 34–81 (MAENAASARKLFVSSALKDIIVNPENFYHDFQQSAQMAEDANQRRQVS) are gld-2-binding. KH domains follow at residues 34–109 (MAEN…MIEI), 113–187 (RVTL…MRRN), 189–259 (HFTV…NEIL), 270–342 (FTLH…IMDL), and 344–419 (PISM…YQKV). The interval 57-471 (PENFYHDFQQ…GSNGRRHRSS (415 aa)) is gls-1-binding. 2 disordered regions span residues 459-508 (LSDG…SFSE) and 602-711 (EQHR…GDIH). Polar residues predominate over residues 487–508 (KQFSESSGGPSRSHTRVSSFSE). Residues 631–644 (PSSSTGSYYPSTTP) show a composition bias toward low complexity. The segment covering 647–659 (RVYEQVREDDLRS) has biased composition (basic and acidic residues). Positions 664-676 (RRTSVNGDDQNVE) are enriched in polar residues. 2 stretches are compositionally biased toward basic and acidic residues: residues 677-687 (SMHDQGYERQY) and 694-711 (LQKDDQQRWKTGSRGDIH). Residues 769-969 (LYMHESPHND…DLSLDETSTY (201 aa)) form a gls-1-binding region. The fbf-1-binding stretch occupies residues 860-949 (NGVTKTILEP…VLNEKEKEIA (90 aa)). The tract at residues 950–969 (DKSIESTVTQDLSLDETSTY) is disordered. The segment covering 954–969 (ESTVTQDLSLDETSTY) has biased composition (polar residues).

As to quaternary structure, interacts (via its KH1 domain) with gld-2. Isoform A but not isoform B interacts specifically with fbf-1 and fbf-2 in an RNA-independent manner. Isoform A interacts with gls-1 isoform C. As to expression, expressed in the germline (at protein level). In adult hermaphrodites, first detected in the transition zone (TZ), weakly expressed in the early mitotic region and in pachytene germ cells, and becomes more abundantly expressed as germ cells enter diakinesis (at protein level). Expressed in primary spermatocytes, but not in secondary spermatocytes or adult sperm (at protein level).

The protein resides in the cytoplasm. The protein localises to the cytoplasmic granule. It localises to the perinuclear region. In terms of biological role, required maternally for germline survival and embryogenesis. Forms a complex with gls-1 which promotes the oogenic cell fate by freeing the translational repressor fbf to repress sperm promoting factors. Promotes maturation of primary spermatocytes to mature sperm. Required during hermaphrodite development to promote sperm fate, which is critical for determining the normal number of sperm. Promotion of sperm fate is at the expense of oogenesis, possibly through the negative regulation of fbf. Required during male development for the continued production of sperm and inhibition of oogenesis. Together with gld-2, promotes the transition from mitosis to meiosis. Required for polyadenylation of neg-1 mRNA during embryogenesis. In Caenorhabditis elegans, this protein is Defective in germ line development protein 3.